The chain runs to 168 residues: Photosystem I assembly protein Ycf3 (168 aa).

TPR repeat units follow at residues 35–68 (AFTY…EIDP), 72–105 (SYIL…NPFL), and 120–153 (GEQA…TPGN).

Belongs to the Ycf3 family.

The protein resides in the plastid. It is found in the chloroplast thylakoid membrane. Functionally, essential for the assembly of the photosystem I (PSI) complex. May act as a chaperone-like factor to guide the assembly of the PSI subunits. The protein is Photosystem I assembly protein Ycf3 of Atropa belladonna (Belladonna).